A 501-amino-acid chain; its full sequence is Putative BTB/POZ domain-containing protein L107 (501 aa).

The region spanning 16–87 is the BTB domain; that stretch reads TDLELTLVDS…FYITDIERSQ (72 aa).

It belongs to the mimivirus BTB/WD family.

This Acanthamoeba polyphaga mimivirus (APMV) protein is Putative BTB/POZ domain-containing protein L107.